Reading from the N-terminus, the 476-residue chain is ATP synthase subunit beta (476 aa).

152–159 (GGAGVGKT) is a binding site for ATP.

It belongs to the ATPase alpha/beta chains family. In terms of assembly, F-type ATPases have 2 components, CF(1) - the catalytic core - and CF(0) - the membrane proton channel. CF(1) has five subunits: alpha(3), beta(3), gamma(1), delta(1), epsilon(1). CF(0) has three main subunits: a(1), b(2) and c(9-12). The alpha and beta chains form an alternating ring which encloses part of the gamma chain. CF(1) is attached to CF(0) by a central stalk formed by the gamma and epsilon chains, while a peripheral stalk is formed by the delta and b chains.

It is found in the cell inner membrane. The catalysed reaction is ATP + H2O + 4 H(+)(in) = ADP + phosphate + 5 H(+)(out). Produces ATP from ADP in the presence of a proton gradient across the membrane. The catalytic sites are hosted primarily by the beta subunits. In Acidiphilium cryptum (strain JF-5), this protein is ATP synthase subunit beta.